The following is a 682-amino-acid chain: Penicillin-binding protein activator LpoA (682 aa).

A signal peptide spans 1 to 26; that stretch reads MLPLNSVRTHAGRLVPVMLAALFLAG. C27 is lipidated: N-palmitoyl cysteine. C27 carries the S-diacylglycerol cysteine lipid modification. Disordered regions lie at residues 240 to 262 and 314 to 341; these read AKQL…TGET and ANNA…VSPT. Low complexity predominate over residues 248–262; sequence GGTPPAAAAPTTGET.

It belongs to the LpoA family. Interacts with PBP1a.

It localises to the cell outer membrane. Functionally, regulator of peptidoglycan synthesis that is essential for the function of penicillin-binding protein 1A (PBP1a). The protein is Penicillin-binding protein activator LpoA of Dickeya chrysanthemi (strain Ech1591) (Dickeya zeae (strain Ech1591)).